The chain runs to 414 residues: Serine hydroxymethyltransferase (414 aa).

Residues Leu117 and 121–123 (GHL) contribute to the (6S)-5,6,7,8-tetrahydrofolate site. Residue Lys226 is modified to N6-(pyridoxal phosphate)lysine. 349 to 351 (SPF) serves as a coordination point for (6S)-5,6,7,8-tetrahydrofolate.

It belongs to the SHMT family. In terms of assembly, homodimer. Requires pyridoxal 5'-phosphate as cofactor.

It is found in the cytoplasm. It catalyses the reaction (6R)-5,10-methylene-5,6,7,8-tetrahydrofolate + glycine + H2O = (6S)-5,6,7,8-tetrahydrofolate + L-serine. It functions in the pathway one-carbon metabolism; tetrahydrofolate interconversion. Its pathway is amino-acid biosynthesis; glycine biosynthesis; glycine from L-serine: step 1/1. Catalyzes the reversible interconversion of serine and glycine with tetrahydrofolate (THF) serving as the one-carbon carrier. This reaction serves as the major source of one-carbon groups required for the biosynthesis of purines, thymidylate, methionine, and other important biomolecules. Also exhibits THF-independent aldolase activity toward beta-hydroxyamino acids, producing glycine and aldehydes, via a retro-aldol mechanism. This chain is Serine hydroxymethyltransferase, found in Desulfovibrio desulfuricans (strain ATCC 27774 / DSM 6949 / MB).